Here is a 202-residue protein sequence, read N- to C-terminus: ATP synthase subunit b 1 (202 aa).

Residues 17-37 (IAAVLCFSVLVPLVAMAAEGG) form a helical membrane-spanning segment.

Belongs to the ATPase B chain family. In terms of assembly, F-type ATPases have 2 components, F(1) - the catalytic core - and F(0) - the membrane proton channel. F(1) has five subunits: alpha(3), beta(3), gamma(1), delta(1), epsilon(1). F(0) has three main subunits: a(1), b(2) and c(10-14). The alpha and beta chains form an alternating ring which encloses part of the gamma chain. F(1) is attached to F(0) by a central stalk formed by the gamma and epsilon chains, while a peripheral stalk is formed by the delta and b chains.

It localises to the cell inner membrane. In terms of biological role, f(1)F(0) ATP synthase produces ATP from ADP in the presence of a proton or sodium gradient. F-type ATPases consist of two structural domains, F(1) containing the extramembraneous catalytic core and F(0) containing the membrane proton channel, linked together by a central stalk and a peripheral stalk. During catalysis, ATP synthesis in the catalytic domain of F(1) is coupled via a rotary mechanism of the central stalk subunits to proton translocation. Functionally, component of the F(0) channel, it forms part of the peripheral stalk, linking F(1) to F(0). The protein is ATP synthase subunit b 1 of Syntrophus aciditrophicus (strain SB).